Consider the following 199-residue polypeptide: ATP-dependent Clp protease proteolytic subunit (199 aa).

Ser97 acts as the Nucleophile in catalysis. Residue His122 is part of the active site.

This sequence belongs to the peptidase S14 family. In terms of assembly, fourteen ClpP subunits assemble into 2 heptameric rings which stack back to back to give a disk-like structure with a central cavity, resembling the structure of eukaryotic proteasomes.

It is found in the cytoplasm. The catalysed reaction is Hydrolysis of proteins to small peptides in the presence of ATP and magnesium. alpha-casein is the usual test substrate. In the absence of ATP, only oligopeptides shorter than five residues are hydrolyzed (such as succinyl-Leu-Tyr-|-NHMec, and Leu-Tyr-Leu-|-Tyr-Trp, in which cleavage of the -Tyr-|-Leu- and -Tyr-|-Trp bonds also occurs).. Its function is as follows. Cleaves peptides in various proteins in a process that requires ATP hydrolysis. Has a chymotrypsin-like activity. Plays a major role in the degradation of misfolded proteins. In Geotalea uraniireducens (strain Rf4) (Geobacter uraniireducens), this protein is ATP-dependent Clp protease proteolytic subunit.